A 141-amino-acid chain; its full sequence is Hemoglobin subunit alpha-A (141 aa).

Positions 1 to 141 constitute a Globin domain; that stretch reads VLSAADKANV…VGAVLTAKYR (141 aa). An O2-binding site is contributed by His-58. Heme b is bound at residue His-87.

This sequence belongs to the globin family. In terms of assembly, heterotetramer of two alpha chains and two beta chains. Red blood cells.

Involved in oxygen transport from the lung to the various peripheral tissues. The sequence is that of Hemoglobin subunit alpha-A (HBAA) from Chloephaga melanoptera (Andean goose).